Here is a 406-residue protein sequence, read N- to C-terminus: Protein IWS1 homolog 2 (406 aa).

Disordered stretches follow at residues 1–28 (MQEL…TGRR) and 41–89 (DEVE…SEEV). The span at 10-24 (EWVKELEGENEESKF) shows a compositional bias: basic and acidic residues. Over residues 41-56 (DEVEEDLDDFTEPADD) the composition is skewed to acidic residues. The span at 69–78 (KKDESGLEKT) shows a compositional bias: basic and acidic residues. Positions 201-284 (NLLKNWLEPL…NKWGRIIYNK (84 aa)) constitute a TFIIS N-terminal domain.

This sequence belongs to the IWS1 family.

It localises to the nucleus. Transcription factor involved in RNA polymerase II (RNAPII) transcription regulation. Involved in transcription elongation. May function at post-recruitment and elongation steps of transcription. This Arabidopsis thaliana (Mouse-ear cress) protein is Protein IWS1 homolog 2.